We begin with the raw amino-acid sequence, 374 residues long: Nudix hydrolase 20, chloroplastic (374 aa).

The transit peptide at 1–49 (MASGFCSLALTVTTSLFSSHAITRRVLPILRWRSSSMSLSPLRHSRALS) directs the protein to the chloroplast. The 142-residue stretch at 205-346 (GYGVHMNGYV…KANCSLVIID (142 aa)) folds into the Nudix hydrolase domain. The Nudix box motif lies at 244-265 (GGLPHGISCGGNLVKECEEEAG). Mg(2+) contacts are provided by E259 and E263.

This sequence belongs to the Nudix hydrolase family. Requires Mg(2+) as cofactor. Mn(2+) is required as a cofactor. Expressed in leaves and inflorescences.

The protein localises to the plastid. It is found in the chloroplast. Probably mediates the hydrolysis of some nucleoside diphosphate derivatives. The sequence is that of Nudix hydrolase 20, chloroplastic (NUDT20) from Arabidopsis thaliana (Mouse-ear cress).